Consider the following 78-residue polypeptide: D-alanyl carrier protein (78 aa).

One can recognise a Carrier domain in the interval 1–77; sequence MAVKEEVVEI…KVIAKVESLI (77 aa). Serine 35 bears the O-(pantetheine 4'-phosphoryl)serine mark.

Belongs to the DltC family. In terms of processing, 4'-phosphopantetheine is transferred from CoA to a specific serine of apo-DCP.

The protein localises to the cytoplasm. It functions in the pathway cell wall biogenesis; lipoteichoic acid biosynthesis. In terms of biological role, carrier protein involved in the D-alanylation of lipoteichoic acid (LTA). The loading of thioester-linked D-alanine onto DltC is catalyzed by D-alanine--D-alanyl carrier protein ligase DltA. The DltC-carried D-alanyl group is further transferred to cell membrane phosphatidylglycerol (PG) by forming an ester bond, probably catalyzed by DltD. D-alanylation of LTA plays an important role in modulating the properties of the cell wall in Gram-positive bacteria, influencing the net charge of the cell wall. This Leuconostoc citreum (strain KM20) protein is D-alanyl carrier protein.